Here is a 189-residue protein sequence, read N- to C-terminus: Interferon alpha-21 (189 aa).

A signal peptide spans 1-23; that stretch reads MALSFSLLMAVLVLSYKSICSLG. Cystine bridges form between cysteine 24-cysteine 122 and cysteine 52-cysteine 162.

This sequence belongs to the alpha/beta interferon family.

It is found in the secreted. Produced by macrophages, IFN-alpha have antiviral activities. Interferon stimulates the production of two enzymes: a protein kinase and an oligoadenylate synthetase. The polypeptide is Interferon alpha-21 (IFNA21) (Homo sapiens (Human)).